The sequence spans 96 residues: Myticin-A (96 aa).

Positions 1 to 20 (MKATILLAVLVAVFVAGTEA) are cleaved as a signal peptide. A propeptide spans 61–96 (VNNPFRVNQVAKSINDLDYTPIMKSMENLDNGMDML) (removed in mature form).

Post-translationally, contains four disulfide bonds. As to expression, hemocytes.

It is found in the secreted. Bacteriolytic activity against Gram-positive bacteria M.luteus, B.megaterium and A.viridans. In Mytilus galloprovincialis (Mediterranean mussel), this protein is Myticin-A.